A 244-amino-acid polypeptide reads, in one-letter code: Protein A47 (244 aa).

Belongs to the orthopoxvirus A47 protein family.

The polypeptide is Protein A47 (Homo sapiens (Human)).